Consider the following 407-residue polypeptide: Cell division protein FtsZ (407 aa).

GTP-binding positions include 18–22 (GGGVN), 105–107 (GTG), glutamate 136, arginine 140, and aspartate 184. The tract at residues 312-407 (FDGGQPPARR…EELDVPDFLK (96 aa)) is disordered. Low complexity-rich tracts occupy residues 336 to 348 (AAPA…STRP) and 368 to 377 (APATASGESS). Over residues 381-390 (VSPPHVPPAR) the composition is skewed to pro residues. Positions 396-407 (QAEELDVPDFLK) are enriched in acidic residues.

This sequence belongs to the FtsZ family. Homodimer. Polymerizes to form a dynamic ring structure in a strictly GTP-dependent manner. Interacts directly with several other division proteins.

It is found in the cytoplasm. Functionally, essential cell division protein that forms a contractile ring structure (Z ring) at the future cell division site. The regulation of the ring assembly controls the timing and the location of cell division. One of the functions of the FtsZ ring is to recruit other cell division proteins to the septum to produce a new cell wall between the dividing cells. Binds GTP and shows GTPase activity. The sequence is that of Cell division protein FtsZ from Streptomyces griseus.